Reading from the N-terminus, the 373-residue chain is Packaging protein 3 (373 aa).

The segment at 1 to 32 (MHPVLRQMRPQPRATTASAAVALSGSGEQEEP) is disordered. Positions 1–150 (MHPVLRQMRP…VTEERNFQKS (150 aa)) are interaction with packaging protein 1. S52 and S334 each carry phosphoserine; by host.

The protein belongs to the adenoviridae packaging protein 3 family. As to quaternary structure, part of the genome packaging complex composed of packaging proteins 1, 2 and 3; this complex specifically binds to the packaging sequence on the left end of viral genomic DNA and performs packaging of the viral genome. Interacts with hexon-linking protein IIIa; this interaction is required to promote correct genome packaging. In terms of processing, cleaved at different sites by the viral protease during virion maturation.

It localises to the host nucleus. Involved in viral genome packaging through its interaction with packaging proteins 1 and 2. After proteolytic cleavage by adenovirus protease, L1 52/55k protein is removed from the capsid during viral maturation. The sequence is that of Packaging protein 3 from Homo sapiens (Human).